A 455-amino-acid chain; its full sequence is Nucleolar protein 12 (455 aa).

2 disordered regions span residues 1 to 104 (MSSF…ENEN) and 117 to 142 (QNEE…RTKA). The span at 24 to 37 (NTRDGPVSKDELVK) shows a compositional bias: basic and acidic residues. Residues 51–66 (PKQQTNENESTLNQSA) show a composition bias toward polar residues. Acidic residues predominate over residues 68–91 (ESDEEEEEYNDESNEGDDSDDAEQ). Residues 124–141 (SKESSEAKSSKVAEERTK) are compositionally biased toward basic and acidic residues. RRM domains lie at 160 to 258 (RTVF…HVSH) and 266 to 351 (RTIF…RAKS). 2 disordered regions span residues 333–402 (LETG…RSTV) and 420–455 (AIKG…MNKV). Basic residues predominate over residues 339 to 348 (KKGRKLRISR). Over residues 349–363 (AKSNAKPSLMSPNHF) the composition is skewed to polar residues. The segment covering 425–438 (KGSKKGKKVKKPRI) has biased composition (basic residues). Residues 439-455 (RERSTKFKEERKTMNKV) are compositionally biased toward basic and acidic residues.

This sequence belongs to the RRM RBM34 family.

Its subcellular location is the nucleus. It localises to the nucleolus. In terms of biological role, involved in pre-25S rRNA processing. This is Nucleolar protein 12 (NOP12) from Candida albicans (strain SC5314 / ATCC MYA-2876) (Yeast).